Here is a 130-residue protein sequence, read N- to C-terminus: Protein ApaG (130 aa).

Positions 3–127 constitute an ApaG domain; that stretch reads RAVTRRIEVT…FSLDSPEGKR (125 aa).

The sequence is that of Protein ApaG from Rhodopseudomonas palustris (strain ATCC BAA-98 / CGA009).